The sequence spans 311 residues: Thioredoxin reductase (311 aa).

35-42 (ERGIPGGQ) lines the FAD pocket. Cysteines 134 and 137 form a disulfide. An FAD-binding site is contributed by 277-286 (DVRDKGLRQI).

It belongs to the class-II pyridine nucleotide-disulfide oxidoreductase family. Homodimer. It depends on FAD as a cofactor.

It is found in the cytoplasm. It carries out the reaction [thioredoxin]-dithiol + NADP(+) = [thioredoxin]-disulfide + NADPH + H(+). This chain is Thioredoxin reductase (trxB), found in Staphylococcus aureus (strain MRSA252).